The chain runs to 149 residues: MHCPFCAAVDTKVIDSRLVSDGSQVRRRRQCLDCNERFTTFEVAELVLPRVIKSDDVREPFNEEKLRRGMLKALEKRPVSSDDVETAISHIKSQLRATGEREVPTKMVGNLVMEALKRLDKVAYIRFASVYRSFEDIREFGEEIARLQD.

Residues 3-34 fold into a zinc finger; the sequence is CPFCAAVDTKVIDSRLVSDGSQVRRRRQCLDC. Residues 49–139 form the ATP-cone domain; it reads PRVIKSDDVR…VYRSFEDIRE (91 aa).

The protein belongs to the NrdR family. Zn(2+) serves as cofactor.

In terms of biological role, negatively regulates transcription of bacterial ribonucleotide reductase nrd genes and operons by binding to NrdR-boxes. The protein is Transcriptional repressor NrdR of Yersinia enterocolitica serotype O:8 / biotype 1B (strain NCTC 13174 / 8081).